A 342-amino-acid polypeptide reads, in one-letter code: Prenyl transferase ptmC (342 aa).

Residues 17–37 form a helical membrane-spanning segment; the sequence is LSFLTLTVGALALIVVLYISI. His-110 lines the isopentenyl diphosphate pocket. Residues Asp-117 and Asp-121 each coordinate Mg(2+). Arg-126 is a binding site for dimethylallyl diphosphate. The N-linked (GlcNAc...) asparagine glycan is linked to Asn-154. Dimethylallyl diphosphate-binding residues include Lys-210, Thr-211, Gln-240, Asn-247, and Lys-257.

This sequence belongs to the FPP/GGPP synthase family.

The protein resides in the membrane. It functions in the pathway secondary metabolite biosynthesis. Prenyl transferase; part of the gene cluster that mediates the biosynthesis of the indole diterpenes penitrems. The geranylgeranyl diphosphate (GGPP) synthase ptmG catalyzes the first step in penitrem biosynthesis via conversion of farnesyl pyrophosphate and isopentyl pyrophosphate into geranylgeranyl pyrophosphate (GGPP). Condensation of indole-3-glycerol phosphate with GGPP by the prenyl transferase ptmC then forms 3-geranylgeranylindole (3-GGI). Epoxidation by the FAD-dependent monooxygenase ptmM leads to a epoxidized-GGI that is substrate of the terpene cyclase ptmB for cyclization to yield paspaline. Paspaline is subsequently converted to 13-desoxypaxilline by the cytochrome P450 monooxygenase ptmP, the latter being then converted to paxilline by the cytochrome P450 monooxygenase ptmQ. Paxilline is converted to beta-paxitriol via C-10 ketoreduction by the short-chain dehydrogenase ptmH which can be monoprenylated at the C-20 by the indole diterpene prenyltransferase ptmD. A two-step elimination (acetylation and elimination) process performed by the O-acetyltransferase ptmV and ptmI leads to the production of the prenylated form of penijanthine. The FAD-linked oxidoreductase ptmO then converts the prenylated form of penijanthine into PC-M5 which is in turn transformed into PC-M4 by the aromatic dimethylallyltransferase ptmE. Five sequential oxidative transformations performed by the cytochrome P450 monooxygenases ptmK, ptmU, ptmL, ptmN and ptmJ yield the various penitrem compounds. PtmK, ptmU and ptmM are involved in the formation of the key bicyclic ring of penitrem C via the formation of the intermediates secopenitrem D and penitrem D. PtmL catalyzes the epoxidation of penitrem D and C to yield penitrem B and F, respectively. PtmJ catalyzes the last benzylic hydroxylation to convert penitrem B to prenitrem E and penitrem F to penitrem A. The protein is Prenyl transferase ptmC of Penicillium ochrochloron.